Here is a 384-residue protein sequence, read N- to C-terminus: Succinyl-diaminopimelate desuccinylase (384 aa).

Zn(2+) is bound at residue H71. The active site involves D73. Zn(2+) is bound at residue D104. The active-site Proton acceptor is the E138. Residues E139, E167, and H353 each coordinate Zn(2+).

This sequence belongs to the peptidase M20A family. DapE subfamily. As to quaternary structure, homodimer. It depends on Zn(2+) as a cofactor. Co(2+) is required as a cofactor.

The enzyme catalyses N-succinyl-(2S,6S)-2,6-diaminopimelate + H2O = (2S,6S)-2,6-diaminopimelate + succinate. Its pathway is amino-acid biosynthesis; L-lysine biosynthesis via DAP pathway; LL-2,6-diaminopimelate from (S)-tetrahydrodipicolinate (succinylase route): step 3/3. Catalyzes the hydrolysis of N-succinyl-L,L-diaminopimelic acid (SDAP), forming succinate and LL-2,6-diaminopimelate (DAP), an intermediate involved in the bacterial biosynthesis of lysine and meso-diaminopimelic acid, an essential component of bacterial cell walls. This Aromatoleum aromaticum (strain DSM 19018 / LMG 30748 / EbN1) (Azoarcus sp. (strain EbN1)) protein is Succinyl-diaminopimelate desuccinylase.